Reading from the N-terminus, the 449-residue chain is Tubulin alpha-2 chain (449 aa).

Glutamine 11, glutamate 71, serine 140, glycine 144, threonine 145, threonine 179, asparagine 206, and asparagine 228 together coordinate GTP. A Mg(2+)-binding site is contributed by glutamate 71. The active site involves glutamate 254.

It belongs to the tubulin family. Dimer of alpha and beta chains. A typical microtubule is a hollow water-filled tube with an outer diameter of 25 nm and an inner diameter of 15 nM. Alpha-beta heterodimers associate head-to-tail to form protofilaments running lengthwise along the microtubule wall with the beta-tubulin subunit facing the microtubule plus end conferring a structural polarity. Microtubules usually have 13 protofilaments but different protofilament numbers can be found in some organisms and specialized cells. Mg(2+) serves as cofactor.

The protein resides in the cytoplasm. The protein localises to the cytoskeleton. It catalyses the reaction GTP + H2O = GDP + phosphate + H(+). In terms of biological role, tubulin is the major constituent of microtubules, a cylinder consisting of laterally associated linear protofilaments composed of alpha- and beta-tubulin heterodimers. Microtubules grow by the addition of GTP-tubulin dimers to the microtubule end, where a stabilizing cap forms. Below the cap, tubulin dimers are in GDP-bound state, owing to GTPase activity of alpha-tubulin. The polypeptide is Tubulin alpha-2 chain (tub1) (Schizosaccharomyces pombe (strain 972 / ATCC 24843) (Fission yeast)).